Consider the following 262-residue polypeptide: Glutamate racemase (262 aa).

Residues 10-11 and 42-43 each bind substrate; these read DS and FG. Residue Cys-74 is the Proton donor/acceptor of the active site. 75–76 provides a ligand contact to substrate; sequence NT. Cys-189 (proton donor/acceptor) is an active-site residue. A substrate-binding site is contributed by 190–191; sequence TH.

Belongs to the aspartate/glutamate racemases family.

The enzyme catalyses L-glutamate = D-glutamate. Its pathway is cell wall biogenesis; peptidoglycan biosynthesis. In terms of biological role, provides the (R)-glutamate required for cell wall biosynthesis. This Mesorhizobium japonicum (strain LMG 29417 / CECT 9101 / MAFF 303099) (Mesorhizobium loti (strain MAFF 303099)) protein is Glutamate racemase.